The following is a 520-amino-acid chain: Polycomb protein PHO (520 aa).

C2H2-type zinc fingers lie at residues 357 to 381, 386 to 408, 414 to 438, and 444 to 468; these read IACP…LHTH, HVCA…QLVH, FQCT…VRIH, and FVCP…ILTH. Positions 475–497 are disordered; the sequence is TSISGKSGCSNAESNSQSEDTSA.

In terms of assembly, component of the Esc/E(z) complex, composed of Esc, E(z), Su(z)12, HDAC1/Rpd3 and Caf1-55. This complex is distinct from the PRC1 complex, which contains many other PcG proteins like Pc, Ph, Psc, Su(z)2. The two complexes however cooperate and interact together during the first 3 hours of development to establish PcG silencing. Component of the chromatin remodeling Ino80 complex. Interacts with Sfmbt to form a pho-repressive complex (PhoRC).

Its subcellular location is the nucleus. Its function is as follows. Polycomb group (PcG) protein that binds to the 5'-CNGCCATNNNNG-3' sequence found in the regulatory regions of many genes. PcG proteins act by forming multiprotein complexes, which are required to maintain the transcriptionally repressive state of homeotic genes throughout development. PcG proteins are not required to initiate repression, but to maintain it during later stages of development. They probably act via the methylation of histones, rendering chromatin heritably changed in its expressibility. Probably targets the Esc/E(z) complex to DNA. Necessary but not sufficient to recruit a functional PcG repressive complex that represses target genes, suggesting that the recruitment of the distinct PRC1 complex is also required to allow a subsequent repression. In terms of biological role, proposed core component of the chromatin remodeling Ino80 complex which is involved in transcriptional regulation, DNA replication and probably DNA repair. The chain is Polycomb protein PHO (pho) from Drosophila melanogaster (Fruit fly).